A 480-amino-acid polypeptide reads, in one-letter code: MTLSFTAHWHDELPGFYTALNPTPLKNARLIWHNASLANDLGVPASLFQPETGAGVWGGETLLPGMHPLAQVYSGHQFGVWAGQLGDGRGILLGEQQLENGHTVDWHLKGAGLTPYSRMGDGRAVLRSTIRESLASEAMHALGIPTSRALSIVTSDTQVARESMEQGAMLMRIAQSHVRFGHFEHFYYRREPEKVRQLADFVIEHHWPQWQNDADKYVLWFQDVVARTASLMACWQTVGFAHGVMNTDNMSILGLTIDYGPYGFLDDYQPDFICNHSDYQGRYSFENQPAVGLWNLQRLAQSLSPFIAVEALNDALDRYQDVLMQEYGKLMRRKLGLMTQEKGDNDILNALFALMSREGSDYTRTFRMLGQTEKHSAASPLRDEFIDRQGFDSWFATYRARLQREETPDDARNAHMNAVNPAMVLRNWLAQRAIDQAEQGDYAELHRLHDALRTPFNDRDDDYVSRPPDWGKRLEVSCSS.

ATP is bound by residues Gly-86, Gly-88, Arg-89, Lys-109, Asp-121, Gly-122, Arg-172, and Arg-179. Asp-248 functions as the Proton acceptor in the catalytic mechanism. Residues Asn-249 and Asp-258 each contribute to the Mg(2+) site. Position 258 (Asp-258) interacts with ATP.

This sequence belongs to the SELO family. Mg(2+) serves as cofactor. Requires Mn(2+) as cofactor.

It catalyses the reaction L-seryl-[protein] + ATP = 3-O-(5'-adenylyl)-L-seryl-[protein] + diphosphate. The catalysed reaction is L-threonyl-[protein] + ATP = 3-O-(5'-adenylyl)-L-threonyl-[protein] + diphosphate. The enzyme catalyses L-tyrosyl-[protein] + ATP = O-(5'-adenylyl)-L-tyrosyl-[protein] + diphosphate. It carries out the reaction L-histidyl-[protein] + UTP = N(tele)-(5'-uridylyl)-L-histidyl-[protein] + diphosphate. It catalyses the reaction L-seryl-[protein] + UTP = O-(5'-uridylyl)-L-seryl-[protein] + diphosphate. The catalysed reaction is L-tyrosyl-[protein] + UTP = O-(5'-uridylyl)-L-tyrosyl-[protein] + diphosphate. Functionally, nucleotidyltransferase involved in the post-translational modification of proteins. It can catalyze the addition of adenosine monophosphate (AMP) or uridine monophosphate (UMP) to a protein, resulting in modifications known as AMPylation and UMPylation. This is Protein nucleotidyltransferase YdiU from Enterobacter sp. (strain 638).